The primary structure comprises 201 residues: Small ribosomal subunit protein uS4 (201 aa).

An S4 RNA-binding domain is found at 91–157 (SRLDNVVYRA…VPFQIARETA (67 aa)).

It belongs to the universal ribosomal protein uS4 family. In terms of assembly, part of the 30S ribosomal subunit. Contacts protein S5. The interaction surface between S4 and S5 is involved in control of translational fidelity.

Functionally, one of the primary rRNA binding proteins, it binds directly to 16S rRNA where it nucleates assembly of the body of the 30S subunit. Its function is as follows. With S5 and S12 plays an important role in translational accuracy. This Mycolicibacterium paratuberculosis (strain ATCC BAA-968 / K-10) (Mycobacterium paratuberculosis) protein is Small ribosomal subunit protein uS4.